Reading from the N-terminus, the 168-residue chain is Nicotinamide-nucleotide adenylyltransferase (168 aa).

The ATP site is built by R8, F9, H13, H16, F119, R121, Y124, G126, T127, and R130.

Belongs to the archaeal NMN adenylyltransferase family. As to quaternary structure, homohexamer existing as a trimer of dimers.

Its subcellular location is the cytoplasm. The catalysed reaction is beta-nicotinamide D-ribonucleotide + ATP + H(+) = diphosphate + NAD(+). The protein operates within cofactor biosynthesis; NAD(+) biosynthesis; NAD(+) from nicotinamide D-ribonucleotide: step 1/1. Functionally, catalyzes the formation of NAD(+) from nicotinamide mononucleotide (NMN) and ATP. This Methanocaldococcus jannaschii (strain ATCC 43067 / DSM 2661 / JAL-1 / JCM 10045 / NBRC 100440) (Methanococcus jannaschii) protein is Nicotinamide-nucleotide adenylyltransferase.